Reading from the N-terminus, the 345-residue chain is Protein-glutamate methylesterase/protein-glutamine glutaminase (345 aa).

A Response regulatory domain is found at lysine 5–isoleucine 123. Aspartate 56 is modified (4-aspartylphosphate). The 191-residue stretch at serine 153–leucine 343 folds into the CheB-type methylesterase domain. Catalysis depends on residues serine 165, histidine 192, and aspartate 285.

It belongs to the CheB family. In terms of processing, phosphorylated by CheA. Phosphorylation of the N-terminal regulatory domain activates the methylesterase activity.

Its subcellular location is the cytoplasm. It carries out the reaction [protein]-L-glutamate 5-O-methyl ester + H2O = L-glutamyl-[protein] + methanol + H(+). The catalysed reaction is L-glutaminyl-[protein] + H2O = L-glutamyl-[protein] + NH4(+). Its function is as follows. Involved in chemotaxis. Part of a chemotaxis signal transduction system that modulates chemotaxis in response to various stimuli. Catalyzes the demethylation of specific methylglutamate residues introduced into the chemoreceptors (methyl-accepting chemotaxis proteins or MCP) by CheR. Also mediates the irreversible deamidation of specific glutamine residues to glutamic acid. This Clostridium acetobutylicum (strain ATCC 824 / DSM 792 / JCM 1419 / IAM 19013 / LMG 5710 / NBRC 13948 / NRRL B-527 / VKM B-1787 / 2291 / W) protein is Protein-glutamate methylesterase/protein-glutamine glutaminase.